Reading from the N-terminus, the 231-residue chain is dTTP/UTP pyrophosphatase (231 aa).

Asp-85 acts as the Proton acceptor in catalysis.

The protein belongs to the Maf family. YhdE subfamily. A divalent metal cation is required as a cofactor.

The protein localises to the cytoplasm. It carries out the reaction dTTP + H2O = dTMP + diphosphate + H(+). It catalyses the reaction UTP + H2O = UMP + diphosphate + H(+). Nucleoside triphosphate pyrophosphatase that hydrolyzes dTTP and UTP. May have a dual role in cell division arrest and in preventing the incorporation of modified nucleotides into cellular nucleic acids. The protein is dTTP/UTP pyrophosphatase of Psychrobacter arcticus (strain DSM 17307 / VKM B-2377 / 273-4).